Here is a 754-residue protein sequence, read N- to C-terminus: Endothelin-converting enzyme 1 (754 aa).

Topologically, residues 1 to 52 are cytoplasmic; sequence MMSTYKRATLDEEDLVDSLSESDVYPNHLQVNFRGPRNGQRCWAARTPVEKR. T9 is subject to Phosphothreonine. The helical; Signal-anchor for type II membrane protein transmembrane segment at 53-73 threads the bilayer; sequence LVVLVALLAAALVACLAVLGI. At 74–754 the chain is on the extracellular side; the sequence is QYQTRTPSVC…MNPHHKCEVW (681 aa). Residues 82–754 form the Peptidase M13 domain; that stretch reads VCLSEACISV…MNPHHKCEVW (673 aa). 5 disulfides stabilise this stretch: C83–C88, C106–C739, C114–C699, C169–C419, and C628–C751. Residues N150, N171, N194, N254, N300, N346, N367, and N523 are each glycosylated (N-linked (GlcNAc...) asparagine). H591 lines the Zn(2+) pocket. The active site involves E592. Position 595 (H595) interacts with Zn(2+). N-linked (GlcNAc...) asparagine glycans are attached at residues N616 and N635. Zn(2+) is bound at residue E651. D655 functions as the Proton donor in the catalytic mechanism.

The protein belongs to the peptidase M13 family. Homodimer; disulfide-linked. Interacts with PPP1R16B. Interacts with TSPAN8; this interaction recruits the endothelin converting enzyme ECE1 to tetraspanin-enriched microdomains and positively modulates its enzymatic activity. Zn(2+) is required as a cofactor.

Its subcellular location is the cell membrane. It carries out the reaction Hydrolysis of the 21-Trp-|-Val-22 bond in big endothelin to form endothelin 1.. Inhibited by phosphoramidon. Its function is as follows. Converts big endothelin-1 to endothelin-1. In Bos taurus (Bovine), this protein is Endothelin-converting enzyme 1 (ECE1).